A 290-amino-acid polypeptide reads, in one-letter code: MKIAVYGKGGIGKSTTSCNISIALARRGGKVLQIGCDPKHDSTFTLTGFLIPTIIDTLQSKDYHYEEIWPEDVIHKGYGGVDCVEAGGPPAGAGCGGYVVGETVKLLKELNAFYEYDIILFDVLGDVVCGGLAAPLNYADYCVIITDNGFDALFAANRIAVSIGEKTRTHLLRLAGLVGNRTSKRDLIDGYVEVCPMPVIEVLPLIEDIRISRVKGKTLFEMVGSEPSLNYVCEYYLNIADQILSQPEGIVPKEIPDRKFFSLLSDSYLSPINDGKQGKNQENLLGFTMV.

ATP is bound by residues 10–15 (GIGKST) and lysine 39. Serine 14 serves as a coordination point for Mg(2+). Cysteine 95 and cysteine 129 together coordinate [4Fe-4S] cluster. 180–181 (NR) is a binding site for ATP.

This sequence belongs to the NifH/BchL/ChlL family. Homodimer. Protochlorophyllide reductase is composed of three subunits; ChlL, ChlN and ChlB. [4Fe-4S] cluster is required as a cofactor.

It localises to the plastid. The protein localises to the chloroplast. It catalyses the reaction chlorophyllide a + oxidized 2[4Fe-4S]-[ferredoxin] + 2 ADP + 2 phosphate = protochlorophyllide a + reduced 2[4Fe-4S]-[ferredoxin] + 2 ATP + 2 H2O. It participates in porphyrin-containing compound metabolism; chlorophyll biosynthesis (light-independent). Its function is as follows. Component of the dark-operative protochlorophyllide reductase (DPOR) that uses Mg-ATP and reduced ferredoxin to reduce ring D of protochlorophyllide (Pchlide) to form chlorophyllide a (Chlide). This reaction is light-independent. The L component serves as a unique electron donor to the NB-component of the complex, and binds Mg-ATP. The polypeptide is Light-independent protochlorophyllide reductase iron-sulfur ATP-binding protein (Cycas taitungensis (Prince sago)).